The chain runs to 724 residues: WW domain-containing protein ZK1098.1 (724 aa).

WW domains lie at 78–111 (PSVE…KPDV) and 123–156 (QPQQ…KPDG). FF domains lie at 224-282 (KKRQ…WKVQ), 295-349 (IKKS…CIDF), 353-422 (RDKE…HIKQ), 442-502 (QRKV…FVED), 507-562 (YTED…LIEK), and 578-632 (KRRL…YKNG). Residues 626 to 724 (FNHYKNGTSG…KRKRRESEAD (99 aa)) are disordered. Over residues 630–639 (KNGTSGTTAG) the composition is skewed to polar residues. Over residues 645-657 (KKKKKKDKKKKNK) the composition is skewed to basic residues. Over residues 681-692 (SKEDRMDDEERG) the composition is skewed to basic and acidic residues. A compositionally biased stretch (basic residues) spans 693 to 703 (KKSKKSRKRSP).

In Caenorhabditis elegans, this protein is WW domain-containing protein ZK1098.1.